An 86-amino-acid polypeptide reads, in one-letter code: Small ribosomal subunit protein bS16 (86 aa).

It belongs to the bacterial ribosomal protein bS16 family.

This chain is Small ribosomal subunit protein bS16, found in Methylibium petroleiphilum (strain ATCC BAA-1232 / LMG 22953 / PM1).